The sequence spans 1171 residues: ATP-dependent helicase/deoxyribonuclease subunit B (1171 aa).

Residues 1-390 form the UvrD-like helicase ATP-binding domain; that stretch reads MSLRFVIGRA…HPLVECIRSA (390 aa). Residue 8–15 coordinates ATP; it reads GRAGSGKS. The 307-residue stretch at 281–587 folds into the UvrD-like helicase C-terminal domain; it reads MEQPRFHSPA…QFANIPPSLD (307 aa). Residues cysteine 805, cysteine 1129, cysteine 1132, and cysteine 1138 each coordinate [4Fe-4S] cluster.

This sequence belongs to the helicase family. AddB/RexB type 1 subfamily. Heterodimer of AddA and AddB. Mg(2+) serves as cofactor. The cofactor is [4Fe-4S] cluster.

In terms of biological role, the heterodimer acts as both an ATP-dependent DNA helicase and an ATP-dependent, dual-direction single-stranded exonuclease. Recognizes the chi site generating a DNA molecule suitable for the initiation of homologous recombination. The AddB subunit has 5' -&gt; 3' nuclease activity but not helicase activity. This chain is ATP-dependent helicase/deoxyribonuclease subunit B, found in Bacillus cereus (strain B4264).